The following is a 537-amino-acid chain: Tripeptidyl aminopeptidase (537 aa).

A signal peptide spans methionine 1–alanine 36. The propeptide occupies alanine 37–alanine 39. The 379-residue stretch at glycine 119–glycine 497 folds into the AB hydrolase-1 domain. Serine 245 acts as the Nucleophile in catalysis. Aspartate 470 is an active-site residue. The active-site Proton donor is the histidine 499.

This sequence belongs to the peptidase S33 family.

The protein resides in the secreted. In terms of biological role, cleaves tripeptides from the N-termini of proteins. Does not cleave mono- or dipeptides, or N-terminally blocked peptides. The sequence is that of Tripeptidyl aminopeptidase from Streptomyces lividans.